The primary structure comprises 376 residues: Alpha-2,8-sialyltransferase 8E (376 aa).

At 1–17 the chain is on the cytoplasmic side; sequence MRYADPSANRDLLGSRT. Residues 18 to 38 form a helical; Signal-anchor for type II membrane protein membrane-spanning segment; it reads LLFIFICAFALVTLLQQILYG. At 39–376 the chain is on the lumenal side; that stretch reads RNYIKRYFEF…RVHTGTCSCC (338 aa). N-linked (GlcNAc...) asparagine glycosylation is found at N56 and N96. Disulfide bonds link C164–C313 and C178–C373. Residues N192 and 214-216 each bind substrate; that span reads NPS. N241 and N284 each carry an N-linked (GlcNAc...) asparagine glycan. 300-302 contributes to the substrate binding site; it reads STG. H348 acts as the Proton donor/acceptor in catalysis.

This sequence belongs to the glycosyltransferase 29 family. As to expression, expressed in fetal and adult brain, adult heart and skeletal muscle. Expressed in fetal and adult brain, not detected in adult heart and skeletal muscle.

Its subcellular location is the golgi apparatus membrane. It catalyses the reaction a ganglioside GT1b (d18:1(4E)) + CMP-N-acetyl-beta-neuraminate = a ganglioside GQ1b (d18:1(4E)) + CMP + H(+). The catalysed reaction is a ganglioside GD3 (d18:1(4E)) + CMP-N-acetyl-beta-neuraminate = a ganglioside GT3 (d18:1(4E)) + CMP + H(+). The enzyme catalyses a ganglioside GD1a (d18:1(4E)) + CMP-N-acetyl-beta-neuraminate = a ganglioside GT1a (d18:1(4E)) + CMP + H(+). It carries out the reaction a ganglioside GM1b (d18:1(4E)) + CMP-N-acetyl-beta-neuraminate = a ganglioside GD1c (d18:1(4E)) + CMP + H(+). It catalyses the reaction a ganglioside GQ1c (d18:1(4E)) + CMP-N-acetyl-beta-neuraminate = a ganglioside GP1c (d18:1(4E)) + CMP + H(+). Its pathway is protein modification; protein glycosylation. In terms of biological role, involved in the synthesis of gangliosides GD1c, GT1a, GQ1b, GP1c and GT3 from GD1a, GT1b, GM1b and GD3 respectively. The sequence is that of Alpha-2,8-sialyltransferase 8E from Homo sapiens (Human).